Consider the following 467-residue polypeptide: ATP synthase subunit beta (467 aa).

152–159 provides a ligand contact to ATP; sequence GGAGVGKT.

The protein belongs to the ATPase alpha/beta chains family. F-type ATPases have 2 components, CF(1) - the catalytic core - and CF(0) - the membrane proton channel. CF(1) has five subunits: alpha(3), beta(3), gamma(1), delta(1), epsilon(1). CF(0) has three main subunits: a(1), b(2) and c(9-12). The alpha and beta chains form an alternating ring which encloses part of the gamma chain. CF(1) is attached to CF(0) by a central stalk formed by the gamma and epsilon chains, while a peripheral stalk is formed by the delta and b chains.

Its subcellular location is the cell inner membrane. It carries out the reaction ATP + H2O + 4 H(+)(in) = ADP + phosphate + 5 H(+)(out). In terms of biological role, produces ATP from ADP in the presence of a proton gradient across the membrane. The catalytic sites are hosted primarily by the beta subunits. The protein is ATP synthase subunit beta of Wolinella succinogenes (strain ATCC 29543 / DSM 1740 / CCUG 13145 / JCM 31913 / LMG 7466 / NCTC 11488 / FDC 602W) (Vibrio succinogenes).